We begin with the raw amino-acid sequence, 336 residues long: MPAINVGIIGVSGYTGFELIRLLLAHPNFKMSYLAASSEAKIDEIFPSLRGVLDLDVHRADAKEAAKRCEVVFLALPHQEAMRYAKQLLSLGVKVVDLSADYRLSRELYEKNYCEHLDVQNLARAVYGLVELNRERIKGANLVANPGCYPTASILAVLPFLKFIDLDFGVVIDAKSGVSGAGKKLSASSHFVSVNENANAYNPINHRHADEIKFHLSNAAGSDISTLFVPHLLPITRGMLVSAYARLVKDIKPLEVLGEFYKNERFIRVRDEAVQIKNVAGTHFCDITAFAHEGKIFINSAIDNLLRGASSQAIANANLMCGLDENLALPMISQFC.

The active site involves Cys-148.

It belongs to the NAGSA dehydrogenase family. Type 1 subfamily.

It localises to the cytoplasm. The enzyme catalyses N-acetyl-L-glutamate 5-semialdehyde + phosphate + NADP(+) = N-acetyl-L-glutamyl 5-phosphate + NADPH + H(+). It participates in amino-acid biosynthesis; L-arginine biosynthesis; N(2)-acetyl-L-ornithine from L-glutamate: step 3/4. Catalyzes the NADPH-dependent reduction of N-acetyl-5-glutamyl phosphate to yield N-acetyl-L-glutamate 5-semialdehyde. The sequence is that of N-acetyl-gamma-glutamyl-phosphate reductase from Campylobacter curvus (strain 525.92).